Reading from the N-terminus, the 510-residue chain is 2,3-bisphosphoglycerate-independent phosphoglycerate mutase (510 aa).

Residues Asp13 and Ser63 each contribute to the Mn(2+) site. Catalysis depends on Ser63, which acts as the Phosphoserine intermediate. Substrate contacts are provided by residues His124, 154–155, Arg186, Arg192, 262–265, and Lys334; these read RD and RADR. 5 residues coordinate Mn(2+): Asp401, His405, Asp442, His443, and His461.

The protein belongs to the BPG-independent phosphoglycerate mutase family. Monomer. Mn(2+) is required as a cofactor.

It carries out the reaction (2R)-2-phosphoglycerate = (2R)-3-phosphoglycerate. It functions in the pathway carbohydrate degradation; glycolysis; pyruvate from D-glyceraldehyde 3-phosphate: step 3/5. In terms of biological role, catalyzes the interconversion of 2-phosphoglycerate and 3-phosphoglycerate. The chain is 2,3-bisphosphoglycerate-independent phosphoglycerate mutase from Aliivibrio fischeri (strain MJ11) (Vibrio fischeri).